The sequence spans 127 residues: Riboflavin kinase (127 aa).

Residue Gly-10–Arg-15 coordinates CDP. Mg(2+)-binding residues include Thr-39 and Asn-41. Residues Thr-96 and Glu-104 each coordinate FMN. Position 109-112 (Val-109–Arg-112) interacts with CDP.

Belongs to the archaeal riboflavin kinase family. The cofactor is Mg(2+).

The enzyme catalyses riboflavin + CTP = CDP + FMN + H(+). Its pathway is cofactor biosynthesis; FMN biosynthesis; FMN from riboflavin (CTP route): step 1/1. In terms of biological role, catalyzes the CTP-dependent phosphorylation of riboflavin (vitamin B2) to form flavin mononucleotide (FMN). This is Riboflavin kinase from Methanococcus maripaludis (strain C7 / ATCC BAA-1331).